Here is a 213-residue protein sequence, read N- to C-terminus: MKTYQSEFLAFCLERGVLRFGEFTLKSGRISPYFFNAGLFNTGSDLARLGRFYAQAISESGAAFDMLFGPAYKGIPLAAATAIALAEHHGRDLPWCFNRKEAKDHGEGGSLVGAPLTGRVLIVDDVITAGTAIRESVDIIRAAGAEPVGVAIALNRQERGKGEHSAIQEVEAEYGLKVINIASLGDLIEFMREQGGLDEHLKAVEAYRAQYGV.

Lys26 is a 5-phospho-alpha-D-ribose 1-diphosphate binding site. Residue 34-35 (FF) participates in orotate binding. Residues 72–73 (YK), Arg99, Lys100, Lys103, His105, and 124–132 (DDVITAGTA) each bind 5-phospho-alpha-D-ribose 1-diphosphate. The orotate site is built by Thr128 and Arg156.

This sequence belongs to the purine/pyrimidine phosphoribosyltransferase family. PyrE subfamily. Homodimer. It depends on Mg(2+) as a cofactor.

It carries out the reaction orotidine 5'-phosphate + diphosphate = orotate + 5-phospho-alpha-D-ribose 1-diphosphate. It participates in pyrimidine metabolism; UMP biosynthesis via de novo pathway; UMP from orotate: step 1/2. Its function is as follows. Catalyzes the transfer of a ribosyl phosphate group from 5-phosphoribose 1-diphosphate to orotate, leading to the formation of orotidine monophosphate (OMP). This is Orotate phosphoribosyltransferase from Thioalkalivibrio sulfidiphilus (strain HL-EbGR7).